Here is a 224-residue protein sequence, read N- to C-terminus: Cytidylate kinase (224 aa).

Residue 9–17 participates in ATP binding; the sequence is GPSGVGKGT.

The protein belongs to the cytidylate kinase family. Type 1 subfamily.

It is found in the cytoplasm. The enzyme catalyses CMP + ATP = CDP + ADP. The catalysed reaction is dCMP + ATP = dCDP + ADP. This chain is Cytidylate kinase, found in Dichelobacter nodosus (strain VCS1703A).